A 446-amino-acid polypeptide reads, in one-letter code: RUN domain-containing protein 3A (446 aa).

An interaction with RAP2A region spans residues 1 to 298; that stretch reads MEASFVQTTM…LQLQLEEAAA (298 aa). The RUN domain maps to 52–189; that stretch reads DDSSEEFVNF…IDFSFCLKGE (138 aa). Phosphothreonine is present on Thr215. The segment at 216–239 is disordered; that stretch reads DEEERHSAESSTSEDNSPEHPYLP. Ser232 carries the post-translational modification Phosphoserine. Residues 267 to 322 adopt a coiled-coil conformation; it reads YLEELVRLRESQLKDLEAENRRLQLQLEEAAAQNQREKRELEGVILELQEQLTGLI. Positions 372–384 are enriched in polar residues; sequence PLSAEASLSSDSQ. The segment at 372 to 403 is disordered; the sequence is PLSAEASLSSDSQRLGEAKRDEEPWGPIGKDP. The span at 385 to 394 shows a compositional bias: basic and acidic residues; that stretch reads RLGEAKRDEE. Residues Ser416 and Ser419 each carry the phosphoserine modification.

Belongs to the RUNDC3 family. In terms of assembly, interacts with the GTP-bound form of RAP2A. In terms of tissue distribution, brain.

Its function is as follows. May act as an effector of RAP2A in neuronal cells. In Mus musculus (Mouse), this protein is RUN domain-containing protein 3A (Rundc3a).